The primary structure comprises 214 residues: Thiamine-phosphate synthase (214 aa).

Residues 37–41 and N73 each bind 4-amino-2-methyl-5-(diphosphooxymethyl)pyrimidine; that span reads QYREK. Residues D74 and D93 each coordinate Mg(2+). Residue S112 coordinates 4-amino-2-methyl-5-(diphosphooxymethyl)pyrimidine. 139–141 provides a ligand contact to 2-[(2R,5Z)-2-carboxy-4-methylthiazol-5(2H)-ylidene]ethyl phosphate; that stretch reads TIS. K142 contacts 4-amino-2-methyl-5-(diphosphooxymethyl)pyrimidine. 2-[(2R,5Z)-2-carboxy-4-methylthiazol-5(2H)-ylidene]ethyl phosphate contacts are provided by residues G171 and 191–192; that span reads IS.

This sequence belongs to the thiamine-phosphate synthase family. It depends on Mg(2+) as a cofactor.

It catalyses the reaction 2-[(2R,5Z)-2-carboxy-4-methylthiazol-5(2H)-ylidene]ethyl phosphate + 4-amino-2-methyl-5-(diphosphooxymethyl)pyrimidine + 2 H(+) = thiamine phosphate + CO2 + diphosphate. The catalysed reaction is 2-(2-carboxy-4-methylthiazol-5-yl)ethyl phosphate + 4-amino-2-methyl-5-(diphosphooxymethyl)pyrimidine + 2 H(+) = thiamine phosphate + CO2 + diphosphate. The enzyme catalyses 4-methyl-5-(2-phosphooxyethyl)-thiazole + 4-amino-2-methyl-5-(diphosphooxymethyl)pyrimidine + H(+) = thiamine phosphate + diphosphate. It functions in the pathway cofactor biosynthesis; thiamine diphosphate biosynthesis; thiamine phosphate from 4-amino-2-methyl-5-diphosphomethylpyrimidine and 4-methyl-5-(2-phosphoethyl)-thiazole: step 1/1. Condenses 4-methyl-5-(beta-hydroxyethyl)thiazole monophosphate (THZ-P) and 2-methyl-4-amino-5-hydroxymethyl pyrimidine pyrophosphate (HMP-PP) to form thiamine monophosphate (TMP). The sequence is that of Thiamine-phosphate synthase from Listeria monocytogenes serotype 4b (strain F2365).